Here is a 718-residue protein sequence, read N- to C-terminus: Sodium/myo-inositol cotransporter (718 aa).

Residues 1–9 lie on the Extracellular side of the membrane; that stretch reads MRAVLETAD. A helical membrane pass occupies residues 10 to 29; it reads IAIVALYFILVMCIGFFAMW. Residues 30–38 lie on the Cytoplasmic side of the membrane; that stretch reads KSNRSTVSG. A helical transmembrane segment spans residues 39-57; it reads YFLAGRSMTWVAIGASLFV. At 58-86 the chain is on the extracellular side; it reads SNIGSEHFIGLAGSGAASGFAVGAWEFNA. Residues 87–110 form a helical membrane-spanning segment; it reads LLLLQLLGWVFIPIYIRSGVYTMP. Over 111 to 123 the chain is Cytoplasmic; sequence EYLSKRFGGHRIQ. A helical transmembrane segment spans residues 124–144; sequence VYFAALSLILYIFTKLSVDLY. Over 145–157 the chain is Extracellular; sequence SGALFIQESMGWN. A helical transmembrane segment spans residues 158 to 183; it reads LYVSVILLIGMTALLTVTGGLVAVIY. Residues 184–186 are Cytoplasmic-facing; that stretch reads TDT. Residues 187-205 form a helical membrane-spanning segment; it reads LQALLMIVGALTLMVISMM. The Extracellular segment spans residues 206–303; sequence EIGGFEEVKR…HAKGSTLMAG (98 aa). The N-linked (GlcNAc...) asparagine glycan is linked to N232. Residues 304–324 form a helical membrane-spanning segment; it reads FLKLLPMFIIVVPGMISRILF. Residues 325–353 are Cytoplasmic-facing; sequence ADDIACINPEHCMQVCGSRAGCSNIAYPR. Residues 354 to 376 form a helical membrane-spanning segment; sequence LVMKLVPVGLRGLMMAVMIAALM. The Extracellular segment spans residues 377–406; it reads SDLDSIFNSASTIFTLDVYKLIRKSASSRE. The chain crosses the membrane as a helical span at residues 407–430; the sequence is LMIVGRIFVAFMVVISIAWVPIIV. Residues 431–443 are Cytoplasmic-facing; that stretch reads EMQGGQMYLYIQE. The chain crosses the membrane as a helical span at residues 444-462; the sequence is VADYLTPPVAALFLLAIFW. The Extracellular portion of the chain corresponds to 463–510; it reads KRCNEQGAFYGGMAGFILVVVRLTLAFAYRAPECDQPDNRPVFIKDIH. A helical membrane pass occupies residues 511-532; that stretch reads YMYVATALFWITGLITVIVSLL. The Cytoplasmic segment spans residues 533 to 695; sequence TPPPTKEQIR…QMLEEPPQVK (163 aa). Residues S594 and S632 each carry the phosphoserine modification. The helical transmembrane segment at 696 to 716 threads the bilayer; it reads VILNIGLFGVCSLGIFMFVYF. At 717–718 the chain is on the extracellular side; that stretch reads SL.

Belongs to the sodium:solute symporter (SSF) (TC 2.A.21) family. Interacts with KCNQ2 (via the pore module). Interacts with KCNQ1; this interaction is direct. Forms coregulatory complexes with ion channels KCNQ2-KCNQ3 and KCNQ1-KCNE2.

It localises to the apical cell membrane. Its subcellular location is the basolateral cell membrane. In terms of biological role, electrogenic Na(+)-coupled sugar symporter that actively transports myo-inositol and its stereoisomer scyllo-inositol across the plasma membrane, with a Na(+) to sugar coupling ratio of 2:1. Maintains myo-inositol concentration gradient that defines cell volume and fluid balance during osmotic stress, in particular in the fetoplacental unit and central nervous system. Forms coregulatory complexes with voltage-gated K(+) ion channels, allosterically altering ion selectivity, voltage dependence and gating kinetics of the channel. In turn, K(+) efflux through the channel forms a local electrical gradient that modulates electrogenic Na(+)-coupled myo-inositol influx through the transporter. Associates with KCNQ1-KCNE2 channel in the apical membrane of choroid plexus epithelium and regulates the myo-inositol gradient between blood and cerebrospinal fluid with an impact on neuron excitability. Associates with KCNQ2-KCNQ3 channel altering ion selectivity, increasing Na(+) and Cs(+) permeation relative to K(+) permeation. Provides myo-inositol precursor for biosynthesis of phosphoinositides such as PI(4,5)P2, thus indirectly affecting the activity of phosphoinositide-dependent ion channels and Ca(2+) signaling upon osmotic stress. The sequence is that of Sodium/myo-inositol cotransporter (SLC5A3) from Bos taurus (Bovine).